A 75-amino-acid polypeptide reads, in one-letter code: Small capsomere-interacting protein (75 aa).

Belongs to the herpesviridae small capsomere-interacting protein family. As to quaternary structure, interacts with the major capsid protein/MCP.

The protein resides in the virion. Its subcellular location is the host nucleus. Participates in the assembly of the infectious particles by decorating the outer surface of the capsid shell and thus forming a layer between the capsid and the tegument. Complexes composed of the capsid protein VP5 and UL48A assemble together in the host cytoplasm and are translocated to the nucleus, where they accumulate and participate in capsid assembly. In terms of biological role, participates in the assembly of the infectious particles by decorating the outer surface of the capsid shell and thus forming a layer between the capsid and the tegument. Complexes composed of the major capsid protein and small capsomere-interacting protein/SCP assemble together in the host cytoplasm and are translocated to the nucleus, where they accumulate and participate in capsid assembly. The sequence is that of Small capsomere-interacting protein from Homo sapiens (Human).